A 235-amino-acid polypeptide reads, in one-letter code: Phosphoribosylaminoimidazole-succinocarboxamide synthase (235 aa).

This sequence belongs to the SAICAR synthetase family.

It catalyses the reaction 5-amino-1-(5-phospho-D-ribosyl)imidazole-4-carboxylate + L-aspartate + ATP = (2S)-2-[5-amino-1-(5-phospho-beta-D-ribosyl)imidazole-4-carboxamido]succinate + ADP + phosphate + 2 H(+). The protein operates within purine metabolism; IMP biosynthesis via de novo pathway; 5-amino-1-(5-phospho-D-ribosyl)imidazole-4-carboxamide from 5-amino-1-(5-phospho-D-ribosyl)imidazole-4-carboxylate: step 1/2. The polypeptide is Phosphoribosylaminoimidazole-succinocarboxamide synthase (Streptococcus thermophilus (strain ATCC BAA-491 / LMD-9)).